Consider the following 459-residue polypeptide: Taurine--pyruvate aminotransferase (459 aa).

Lys287 is subject to N6-(pyridoxal phosphate)lysine.

This sequence belongs to the class-III pyridoxal-phosphate-dependent aminotransferase family. The cofactor is pyridoxal 5'-phosphate.

The protein localises to the cytoplasm. The enzyme catalyses taurine + pyruvate = sulfoacetaldehyde + L-alanine. It participates in organosulfur degradation; taurine degradation via aerobic pathway; acetyl phosphate and sulfite from taurine: step 1/2. Its function is as follows. Catalyzes the degradation of taurine into alanine and sulfoacetaldehyde. The sequence is that of Taurine--pyruvate aminotransferase from Rhodobacter capsulatus (strain ATCC BAA-309 / NBRC 16581 / SB1003).